The primary structure comprises 597 residues: Elongation factor 4 (597 aa).

The region spanning lysine 2–glutamate 184 is the tr-type G domain. GTP-binding positions include aspartate 14 to threonine 19 and asparagine 131 to aspartate 134.

It belongs to the TRAFAC class translation factor GTPase superfamily. Classic translation factor GTPase family. LepA subfamily.

It localises to the cell inner membrane. It catalyses the reaction GTP + H2O = GDP + phosphate + H(+). Its function is as follows. Required for accurate and efficient protein synthesis under certain stress conditions. May act as a fidelity factor of the translation reaction, by catalyzing a one-codon backward translocation of tRNAs on improperly translocated ribosomes. Back-translocation proceeds from a post-translocation (POST) complex to a pre-translocation (PRE) complex, thus giving elongation factor G a second chance to translocate the tRNAs correctly. Binds to ribosomes in a GTP-dependent manner. In Aliivibrio fischeri (strain ATCC 700601 / ES114) (Vibrio fischeri), this protein is Elongation factor 4.